We begin with the raw amino-acid sequence, 330 residues long: D-lactate dehydrogenase (330 aa).

NAD(+) is bound by residues 155-156, D175, 206-207, N212, 233-235, and D259; these read RI, MP, and MAR. R235 is an active-site residue. The active site involves E264. H296 (proton donor) is an active-site residue.

This sequence belongs to the D-isomer specific 2-hydroxyacid dehydrogenase family.

It catalyses the reaction (R)-lactate + NAD(+) = pyruvate + NADH + H(+). This Streptococcus agalactiae serotype V (strain ATCC BAA-611 / 2603 V/R) protein is D-lactate dehydrogenase (ldhD).